The primary structure comprises 335 residues: UPF0353 protein Mjls_2492 (335 aa).

A run of 2 helical transmembrane segments spans residues 18-38 (WFFL…IVAL) and 67-87 (LPAI…AGPT). The VWFA domain maps to 98 to 294 (VVMLVIDVSQ…EQLREVYANL (197 aa)). A helical transmembrane segment spans residues 309-329 (VGWLRLGALVLALSALAALLL).

The protein belongs to the UPF0353 family.

It localises to the cell membrane. The protein is UPF0353 protein Mjls_2492 of Mycobacterium sp. (strain JLS).